Reading from the N-terminus, the 549-residue chain is Indole-3-acetic acid-amido synthetase GH3.2 (549 aa).

The protein belongs to the IAA-amido conjugating enzyme family. As to expression, expressed in flowers, pollen, cotyledons, stipules, true leaves, hypocotyls, and all parts of the roots except for the primary root tips.

Functionally, catalyzes the synthesis of indole-3-acetic acid (IAA)-amino acid conjugates, providing a mechanism for the plant to cope with the presence of excess auxin. Strongly reactive with Glu, Gln, Trp, Asp, Ala, Leu, Phe, Gly, Tyr, Met, Ile and Val. Little or no product formation with His, Ser, Thr, Arg, Lys, or Cys. Also active on pyruvic and butyric acid analogs of IAA, PAA and the synthetic auxin naphthaleneacetic acid (NAA). The two chlorinated synthetic auxin herbicides 2,4-D and 3,6-dichloro-o-anisic acid (dicamba) cannot be used as substrates. This Arabidopsis thaliana (Mouse-ear cress) protein is Indole-3-acetic acid-amido synthetase GH3.2 (GH3.2).